The sequence spans 333 residues: Probable 4-hydroxyproline 2-epimerase (333 aa).

The active-site Proton acceptor is the Cys-90. Substrate-binding positions include 91–92 (GH), His-223, and Asp-249. The Proton donor role is filled by Cys-253. Substrate is bound at residue 254 to 255 (GT).

The protein belongs to the proline racemase family.

The catalysed reaction is trans-4-hydroxy-L-proline = cis-4-hydroxy-D-proline. Functionally, likely catalyzes the epimerization of trans-4-hydroxy-L-proline (t4LHyp) to cis-4-hydroxy-D-proline (c4DHyp). May be involved in the degradation pathway that converts t4LHyp to alpha-ketoglutarate, which would allow R.meliloti to grow on t4LHyp as a sole carbon source. The polypeptide is Probable 4-hydroxyproline 2-epimerase (Rhizobium meliloti (strain 1021) (Ensifer meliloti)).